The primary structure comprises 489 residues: Valine--tRNA ligase (489 aa).

The 'KMSKS' region motif lies at 482-486 (KMSKS). Residue K485 participates in ATP binding.

It belongs to the class-I aminoacyl-tRNA synthetase family.

The catalysed reaction is tRNA(Val) + L-valine + ATP = L-valyl-tRNA(Val) + AMP + diphosphate. The protein is Valine--tRNA ligase (VALS) of Trichomonas vaginalis.